The following is a 145-amino-acid chain: uncharacterized protein (145 aa).

A signal peptide spans 1 to 20 (MPSKVCTLILLFSVINQMKC).

This is an uncharacterized protein from Caenorhabditis elegans.